Reading from the N-terminus, the 388-residue chain is Biotin synthase (388 aa).

The Radical SAM core domain occupies 47–277; the sequence is WFGRRVKLNY…DVEVRIAGGR (231 aa). 3 residues coordinate [4Fe-4S] cluster: Cys65, Cys69, and Cys72. Residues Cys109, Cys142, Cys202, and Arg272 each contribute to the [2Fe-2S] cluster site. The interval 335–371 is disordered; that stretch reads APAGGCGSEQSAGCGSHEGGGACGSAPAPRTDEARTD.

The protein belongs to the radical SAM superfamily. Biotin synthase family. Homodimer. It depends on [4Fe-4S] cluster as a cofactor. [2Fe-2S] cluster serves as cofactor.

The enzyme catalyses (4R,5S)-dethiobiotin + (sulfur carrier)-SH + 2 reduced [2Fe-2S]-[ferredoxin] + 2 S-adenosyl-L-methionine = (sulfur carrier)-H + biotin + 2 5'-deoxyadenosine + 2 L-methionine + 2 oxidized [2Fe-2S]-[ferredoxin]. Its pathway is cofactor biosynthesis; biotin biosynthesis; biotin from 7,8-diaminononanoate: step 2/2. In terms of biological role, catalyzes the conversion of dethiobiotin (DTB) to biotin by the insertion of a sulfur atom into dethiobiotin via a radical-based mechanism. The polypeptide is Biotin synthase (Streptomyces avermitilis (strain ATCC 31267 / DSM 46492 / JCM 5070 / NBRC 14893 / NCIMB 12804 / NRRL 8165 / MA-4680)).